The chain runs to 206 residues: Ion-translocating oxidoreductase complex subunit G (206 aa).

The chain crosses the membrane as a helical span at residues 9-29 (GITLALFAAGSTGLTAVINQM). T174 carries the post-translational modification FMN phosphoryl threonine.

The protein belongs to the RnfG family. As to quaternary structure, the complex is composed of six subunits: RsxA, RsxB, RsxC, RsxD, RsxE and RsxG. The cofactor is FMN.

Its subcellular location is the cell inner membrane. Functionally, part of a membrane-bound complex that couples electron transfer with translocation of ions across the membrane. Required to maintain the reduced state of SoxR. This is Ion-translocating oxidoreductase complex subunit G from Salmonella typhi.